The chain runs to 211 residues: Transcription antitermination protein NusB (211 aa).

It belongs to the NusB family.

Its function is as follows. Involved in transcription antitermination. Required for transcription of ribosomal RNA (rRNA) genes. Binds specifically to the boxA antiterminator sequence of the ribosomal RNA (rrn) operons. In Trichormus variabilis (strain ATCC 29413 / PCC 7937) (Anabaena variabilis), this protein is Transcription antitermination protein NusB.